The following is a 701-amino-acid chain: Elongation factor G 1 (701 aa).

The tr-type G domain maps to Ser5 to Thr281. Residues Ala14–Thr21, Asp78–His82, and Asn132–Asp135 contribute to the GTP site.

It belongs to the TRAFAC class translation factor GTPase superfamily. Classic translation factor GTPase family. EF-G/EF-2 subfamily.

Its subcellular location is the cytoplasm. Functionally, catalyzes the GTP-dependent ribosomal translocation step during translation elongation. During this step, the ribosome changes from the pre-translocational (PRE) to the post-translocational (POST) state as the newly formed A-site-bound peptidyl-tRNA and P-site-bound deacylated tRNA move to the P and E sites, respectively. Catalyzes the coordinated movement of the two tRNA molecules, the mRNA and conformational changes in the ribosome. This chain is Elongation factor G 1, found in Colwellia psychrerythraea (strain 34H / ATCC BAA-681) (Vibrio psychroerythus).